The sequence spans 123 residues: UPF0426 protein At1g28150, chloroplastic (123 aa).

The transit peptide at 1 to 26 (MGFVLICTCPPSSGVVVSQLHHHQFS) directs the protein to the chloroplast. The interval 97–123 (SGITEEEVDADGVVSNDEDSPQQIEIE) is disordered. Positions 100–123 (TEEEVDADGVVSNDEDSPQQIEIE) are enriched in acidic residues.

This sequence belongs to the UPF0426 family.

It is found in the plastid. The protein localises to the chloroplast. Its subcellular location is the plastoglobule. This is UPF0426 protein At1g28150, chloroplastic from Arabidopsis thaliana (Mouse-ear cress).